The sequence spans 191 residues: UPF0301 protein Bphy_2327 (191 aa).

Belongs to the UPF0301 (AlgH) family.

In Paraburkholderia phymatum (strain DSM 17167 / CIP 108236 / LMG 21445 / STM815) (Burkholderia phymatum), this protein is UPF0301 protein Bphy_2327.